The following is a 530-amino-acid chain: Putative ABC transporter ATP-binding protein SSO2030 (530 aa).

ABC transporter domains are found at residues 6–243 (IRDL…LGLE) and 282–516 (ALYA…EPPL). ATP-binding positions include 38-45 (GRSGSGKS) and 314-321 (GKNGSGKT).

Belongs to the ABC transporter superfamily.

Its subcellular location is the cell membrane. Functionally, probably part of an ABC transporter complex. Responsible for energy coupling to the transport system. This chain is Putative ABC transporter ATP-binding protein SSO2030, found in Saccharolobus solfataricus (strain ATCC 35092 / DSM 1617 / JCM 11322 / P2) (Sulfolobus solfataricus).